A 776-amino-acid polypeptide reads, in one-letter code: Protein translocase subunit SecA 2 (776 aa).

ATP contacts are provided by residues Q80, 98 to 102 (GEGKT), and D486.

It belongs to the SecA family. Monomer and homodimer. Part of the essential Sec protein translocation apparatus which comprises SecA, SecYEG and auxiliary proteins SecDF. Other proteins may also be involved.

The protein resides in the cell membrane. It localises to the cytoplasm. The enzyme catalyses ATP + H2O + cellular proteinSide 1 = ADP + phosphate + cellular proteinSide 2.. In terms of biological role, part of the Sec protein translocase complex. Interacts with the SecYEG preprotein conducting channel. Has a central role in coupling the hydrolysis of ATP to the transfer of proteins into and across the cell membrane, serving as an ATP-driven molecular motor driving the stepwise translocation of polypeptide chains across the membrane. This chain is Protein translocase subunit SecA 2, found in Listeria innocua serovar 6a (strain ATCC BAA-680 / CLIP 11262).